The sequence spans 61 residues: Large ribosomal subunit protein eL20 (61 aa).

This sequence belongs to the eukaryotic ribosomal protein eL20 family. In terms of assembly, part of the 50S ribosomal subunit. Binds 23S rRNA.

The polypeptide is Large ribosomal subunit protein eL20 (Methanosarcina mazei (strain ATCC BAA-159 / DSM 3647 / Goe1 / Go1 / JCM 11833 / OCM 88) (Methanosarcina frisia)).